A 250-amino-acid polypeptide reads, in one-letter code: Proteasome subunit alpha type-4 (250 aa).

The protein belongs to the peptidase T1A family. As to quaternary structure, the 26S proteasome consists of a 20S proteasome core and two 19S regulatory subunits. The 20S proteasome core is composed of 28 subunits that are arranged in four stacked rings, resulting in a barrel-shaped structure. The two end rings are each formed by seven alpha subunits, and the two central rings are each formed by seven beta subunits. The catalytic chamber with the active sites is on the inside of the barrel.

Its subcellular location is the cytoplasm. It is found in the nucleus. In terms of biological role, the proteasome is a multicatalytic proteinase complex which is characterized by its ability to cleave peptides with Arg, Phe, Tyr, Leu, and Glu adjacent to the leaving group at neutral or slightly basic pH. The proteasome has an ATP-dependent proteolytic activity. The sequence is that of Proteasome subunit alpha type-4 (psmA4) from Dictyostelium discoideum (Social amoeba).